The following is a 187-amino-acid chain: Elongation factor P (187 aa).

This sequence belongs to the elongation factor P family.

Its subcellular location is the cytoplasm. The protein operates within protein biosynthesis; polypeptide chain elongation. Involved in peptide bond synthesis. Stimulates efficient translation and peptide-bond synthesis on native or reconstituted 70S ribosomes in vitro. Probably functions indirectly by altering the affinity of the ribosome for aminoacyl-tRNA, thus increasing their reactivity as acceptors for peptidyl transferase. In Frankia casuarinae (strain DSM 45818 / CECT 9043 / HFP020203 / CcI3), this protein is Elongation factor P.